We begin with the raw amino-acid sequence, 344 residues long: Arylacetonitrilase (344 aa).

The CN hydrolase domain occupies 5–290 (LRVAVTQAEP…EGIVYADLDL (286 aa)). Glutamate 45 serves as the catalytic Proton acceptor. The active site involves lysine 126. Cysteine 167 (nucleophile) is an active-site residue. A disordered region spans residues 324 to 344 (VIPRDEEEPSRKANVVVPKQE).

Belongs to the carbon-nitrogen hydrolase superfamily. Nitrilase family.

It catalyses the reaction a nitrile + 2 H2O = a carboxylate + NH4(+). The catalysed reaction is 4-chlorophenylacetonitrile + 2 H2O = 4-chlorophenylacetate + NH4(+). In terms of biological role, nitrilase that hydrolyzes preferentially phenylacetonitrile and (R,S)-mandelonitrile. Also acts on dinitriles like phenylenediacetonitriles (PDAs) 1,2-PDA, 1,3-PDA, and 1,4-PDA, and cyanophenyl acetonitriles (CPAs) 2-CPA and 4-CPA. The protein is Arylacetonitrilase of Macrophomina phaseolina (strain MS6) (Charcoal rot fungus).